A 406-amino-acid chain; its full sequence is N-acetylmuramoyl-L-alanine amidase CwlM (406 aa).

2 peptidoglycan-binding domain regions span residues S18 to L83 and G105 to L160. Residues I193–K370 enclose the MurNAc-LAA domain.

It belongs to the N-acetylmuramoyl-L-alanine amidase 3 family.

It is found in the periplasm. It catalyses the reaction Hydrolyzes the link between N-acetylmuramoyl residues and L-amino acid residues in certain cell-wall glycopeptides.. The protein operates within cell wall degradation; peptidoglycan degradation. Its function is as follows. Cell-wall hydrolase that hydrolyzes the amide bond between N-acetylmuramic acid and L-alanine in cell-wall glycopeptides. Is able to lyse whole mycobacteria, release peptidoglycan from the cell wall of M.luteus and M.smegmatis, and cleave N-acetylmuramoyl-L-alanyl-D-isoglutamine, releasing free N-acetylmuramic acid and dipeptide. The sequence is that of N-acetylmuramoyl-L-alanine amidase CwlM from Mycobacterium tuberculosis (strain ATCC 25618 / H37Rv).